The primary structure comprises 247 residues: Aliphatic sulfonates import ATP-binding protein SsuB 3 (247 aa).

Residues 13–227 (VRVRGAGRAF…SVVDPEFSAL (215 aa)) form the ABC transporter domain. 45–52 (GASGSGKS) contributes to the ATP binding site.

This sequence belongs to the ABC transporter superfamily. Aliphatic sulfonates importer (TC 3.A.1.17.2) family. In terms of assembly, the complex is composed of two ATP-binding proteins (SsuB), two transmembrane proteins (SsuC) and a solute-binding protein (SsuA).

Its subcellular location is the cell membrane. It catalyses the reaction ATP + H2O + aliphatic sulfonate-[sulfonate-binding protein]Side 1 = ADP + phosphate + aliphatic sulfonateSide 2 + [sulfonate-binding protein]Side 1.. Its function is as follows. Part of the ABC transporter complex SsuABC involved in aliphatic sulfonates import. Responsible for energy coupling to the transport system. This chain is Aliphatic sulfonates import ATP-binding protein SsuB 3, found in Nocardia farcinica (strain IFM 10152).